The following is a 634-amino-acid chain: Phospholipase B (634 aa).

The N-terminal stretch at 1-19 (MSIITTAFALSLLATTAFA) is a signal peptide. The PLA2c domain maps to 46 to 569 (DCPSNVTWIR…DTWCWAGDDN (524 aa)). N-linked (GlcNAc...) asparagine glycans are attached at residues N50, N56, N122, N231, N246, N269, N311, N340, N384, N430, N478, N498, N525, N550, N569, N591, and N603.

The protein belongs to the lysophospholipase family. Post-translationally, N-glycosylated.

It is found in the secreted. The enzyme catalyses a 1-acyl-sn-glycero-3-phosphocholine + H2O = sn-glycerol 3-phosphocholine + a fatty acid + H(+). Functionally, exhibits phospholipase B (PLB), lysophospholipase (LPL) and lysophospholipase/transacylase (LPTA) activities. In Cryptococcus neoformans var. neoformans serotype D (strain JEC21 / ATCC MYA-565) (Filobasidiella neoformans), this protein is Phospholipase B (PLB1).